Reading from the N-terminus, the 273-residue chain is NAD-dependent protein deacylase (273 aa).

The Deacetylase sirtuin-type domain maps to 20–272; the sequence is RERLRQRIFF…PEFVEKLLEG (253 aa). 48–67 provides a ligand contact to NAD(+); it reads GAGISAESGIRTFRAADGLW. Positions 92 and 95 each coordinate substrate. An NAD(+)-binding site is contributed by 129-132; it reads QNID. The active-site Proton acceptor is His147. The Zn(2+) site is built by Cys155 and Cys174. Residues 214 to 216, 240 to 242, and Ala258 each bind NAD(+); these read GTS and NLE.

It belongs to the sirtuin family. Class III subfamily. It depends on Zn(2+) as a cofactor.

The protein resides in the cytoplasm. It carries out the reaction N(6)-acetyl-L-lysyl-[protein] + NAD(+) + H2O = 2''-O-acetyl-ADP-D-ribose + nicotinamide + L-lysyl-[protein]. It catalyses the reaction N(6)-succinyl-L-lysyl-[protein] + NAD(+) + H2O = 2''-O-succinyl-ADP-D-ribose + nicotinamide + L-lysyl-[protein]. The catalysed reaction is N(6)-(2-hydroxyisobutanoyl)-L-lysyl-[protein] + NAD(+) + H2O = 2''-O-(2-hydroxyisobutanoyl)-ADP-D-ribose + nicotinamide + L-lysyl-[protein]. Its function is as follows. NAD-dependent lysine deacetylase that specifically removes acetyl groups on target proteins. Also acts as a protein-lysine deacylase by mediating protein desuccinylation and de-2-hydroxyisobutyrylation. Modulates the activities of several proteins which are inactive in their acylated form. This Shigella flexneri protein is NAD-dependent protein deacylase.